A 294-amino-acid polypeptide reads, in one-letter code: MDSPFKTIALIGKPHHEGANQTLTGLHQYLTTRGFKVLVESRVAHTLGIMDENVMDLVQLGEQADLAIVVGGDGNMLGAARVLSRFDVAVIGVNRGNLGFLTDLSPQDYLLPLEQVLSGHYKSEHRFLLEAAVYRHGERKSSNLAVNEAVLHPGKIAHMIEFEVYIDGSFMYSQRSDGIIVATPTGSTAYSLSAGGAILTPKLNAITLVPMFPHTLSSRPIVLDADSEVRLLVSPDNQDDAMQVSCDGQVTLAVHPGDEILIKKSKHKLHLVHPLDYSYFHVLRNKLGWGSKLF.

Asp73 (proton acceptor) is an active-site residue. NAD(+)-binding positions include 73–74, 147–148, His158, Arg175, Asp177, 188–193, and Gln249; these read DG, NE, and TAYSLS.

It belongs to the NAD kinase family. A divalent metal cation serves as cofactor.

It is found in the cytoplasm. It catalyses the reaction NAD(+) + ATP = ADP + NADP(+) + H(+). Its function is as follows. Involved in the regulation of the intracellular balance of NAD and NADP, and is a key enzyme in the biosynthesis of NADP. Catalyzes specifically the phosphorylation on 2'-hydroxyl of the adenosine moiety of NAD to yield NADP. In Aeromonas salmonicida (strain A449), this protein is NAD kinase.